The chain runs to 436 residues: GDP-mannose 6-dehydrogenase (436 aa).

NAD(+) is bound by residues tyrosine 10, valine 11, aspartate 30, lysine 35, threonine 86, and threonine 124. Glutamate 161, lysine 210, asparagine 214, histidine 217, asparagine 225, tyrosine 256, tyrosine 257, arginine 259, and glycine 265 together coordinate GDP-alpha-D-mannuronate. Residue cysteine 268 is part of the active site. Lysine 271 provides a ligand contact to NAD(+). Lysine 324 is a binding site for GDP-alpha-D-mannuronate. Arginine 331 is an NAD(+) binding site.

It belongs to the UDP-glucose/GDP-mannose dehydrogenase family.

The enzyme catalyses GDP-alpha-D-mannose + 2 NAD(+) + H2O = GDP-alpha-D-mannuronate + 2 NADH + 3 H(+). The protein operates within glycan biosynthesis; alginate biosynthesis. Functionally, catalyzes the oxidation of guanosine diphospho-D-mannose (GDP-D-mannose) to GDP-D-mannuronic acid, a precursor for alginate polymerization. The alginate layer causes a mucoid phenotype and is essential for cyst formation. The sequence is that of GDP-mannose 6-dehydrogenase (algD) from Azotobacter vinelandii.